The chain runs to 255 residues: MAVGKNKRLSKGKKGLKKKVVDPFTRKEWFDIKAPSTFENRNVGKTLVNKSTGLKNAADALKGRVVEVCLADLQGSEDHSFRKIKLRVDEVQGKNLLTNFHGMDFTTDKVRSMVRKWQTLIEANVTVKTSDDYVLRVFAIAFTRKQSNQVKRTSYAQSSHIRAIRKVISEILTREVQGSTLAQLTSKLIPEVINKEIENATKDIFPLQNVHIRKVKLLKQPKFDLGSLMALHGEGSGEEKGKKVSGFKDEVLETV.

An N-acetylalanine; partial modification is found at alanine 2.

It belongs to the eukaryotic ribosomal protein eS1 family. Component of the small ribosomal subunit. Mature ribosomes consist of a small (40S) and a large (60S) subunit. The 40S subunit contains about 33 different proteins and 1 molecule of RNA (18S). The 60S subunit contains about 49 different proteins and 3 molecules of RNA (25S, 5.8S and 5S).

It localises to the cytoplasm. The sequence is that of Small ribosomal subunit protein eS1 from Vanderwaltozyma polyspora (strain ATCC 22028 / DSM 70294 / BCRC 21397 / CBS 2163 / NBRC 10782 / NRRL Y-8283 / UCD 57-17) (Kluyveromyces polysporus).